The following is a 184-amino-acid chain: MAPKAVLVGLPGSGKSTIGRRLAKALGVGLLDTDAAIEQQAGRSIAEIFATDGEEEFRRIEEEVVRAALADHDGVLSLGGGAVTSPGVRSALDGHTVVYLEISAAEGVRRTGGSNVRPLLAGPDRAEKFRALMSQRIPLYRRVSTIRVDTNRRNPGAVVRYIMSRLDDPTPNTSPSSTASGAAT.

Gly12–Thr17 serves as a coordination point for ATP. Residue Ser16 coordinates Mg(2+). Residues Asp34, Arg58, and Gly80 each contribute to the substrate site. Arg117 contacts ATP. Arg136 serves as a coordination point for substrate. Position 153 (Arg153) interacts with ATP. The interval Met163–Thr184 is disordered. Low complexity predominate over residues Pro169–Thr184.

It belongs to the shikimate kinase family. In terms of assembly, monomer. Mg(2+) is required as a cofactor.

It is found in the cytoplasm. It catalyses the reaction shikimate + ATP = 3-phosphoshikimate + ADP + H(+). It functions in the pathway metabolic intermediate biosynthesis; chorismate biosynthesis; chorismate from D-erythrose 4-phosphate and phosphoenolpyruvate: step 5/7. Functionally, catalyzes the specific phosphorylation of the 3-hydroxyl group of shikimic acid using ATP as a cosubstrate. This chain is Shikimate kinase, found in Mycobacterium marinum (strain ATCC BAA-535 / M).